The primary structure comprises 375 residues: 4-hydroxy-3-methylbut-2-en-1-yl diphosphate synthase (flavodoxin) (375 aa).

Residues Cys275, Cys278, Cys310, and Glu317 each coordinate [4Fe-4S] cluster.

This sequence belongs to the IspG family. The cofactor is [4Fe-4S] cluster.

It carries out the reaction (2E)-4-hydroxy-3-methylbut-2-enyl diphosphate + oxidized [flavodoxin] + H2O + 2 H(+) = 2-C-methyl-D-erythritol 2,4-cyclic diphosphate + reduced [flavodoxin]. Its pathway is isoprenoid biosynthesis; isopentenyl diphosphate biosynthesis via DXP pathway; isopentenyl diphosphate from 1-deoxy-D-xylulose 5-phosphate: step 5/6. Its function is as follows. Converts 2C-methyl-D-erythritol 2,4-cyclodiphosphate (ME-2,4cPP) into 1-hydroxy-2-methyl-2-(E)-butenyl 4-diphosphate. In Ruegeria pomeroyi (strain ATCC 700808 / DSM 15171 / DSS-3) (Silicibacter pomeroyi), this protein is 4-hydroxy-3-methylbut-2-en-1-yl diphosphate synthase (flavodoxin).